Consider the following 166-residue polypeptide: Deglycase PYRAB04690 (166 aa).

Positions M1 to K166 constitute a PfpI endopeptidase domain. H101 is an active-site residue.

This sequence belongs to the peptidase C56 family. In terms of assembly, homohexamer formed by a dimer of trimers that assemble into a hollow ring structure.

The protein resides in the cytoplasm. The enzyme catalyses N(omega)-(1-hydroxy-2-oxopropyl)-L-arginyl-[protein] + H2O = lactate + L-arginyl-[protein] + H(+). It carries out the reaction N(6)-(1-hydroxy-2-oxopropyl)-L-lysyl-[protein] + H2O = lactate + L-lysyl-[protein] + H(+). It catalyses the reaction S-(1-hydroxy-2-oxopropyl)-L-cysteinyl-[protein] + H2O = lactate + L-cysteinyl-[protein] + H(+). The catalysed reaction is N(omega)-(1-hydroxy-2-oxoethyl)-L-arginyl-[protein] + H2O = L-arginyl-[protein] + glycolate + H(+). The enzyme catalyses N(6)-(1-hydroxy-2-oxoethyl)-L-lysyl-[protein] + H2O = glycolate + L-lysyl-[protein] + H(+). It carries out the reaction S-(1-hydroxy-2-oxoethyl)-L-cysteinyl-[protein] + H2O = glycolate + L-cysteinyl-[protein] + H(+). Functionally, deglycase that catalyzes the deglycation of the Maillard adducts formed between amino groups of proteins and reactive carbonyl groups of glyoxals. Thus, functions as a protein deglycase that repairs methylglyoxal- and glyoxal-glycated proteins, and releases repaired proteins and lactate or glycolate, respectively. Deglycates cysteine, arginine and lysine residues in proteins, and thus reactivates these proteins by reversing glycation by glyoxals. Acts on early glycation intermediates (hemithioacetals and aminocarbinols), preventing the formation of advanced glycation endproducts (AGE) that cause irreversible damage. Also displays proteolytic activity. In Pyrococcus abyssi (strain GE5 / Orsay), this protein is Deglycase PYRAB04690.